Here is a 227-residue protein sequence, read N- to C-terminus: tRNA pseudouridine synthase B (227 aa).

D42 functions as the Nucleophile in the catalytic mechanism.

It belongs to the pseudouridine synthase TruB family. Type 1 subfamily.

It catalyses the reaction uridine(55) in tRNA = pseudouridine(55) in tRNA. Responsible for synthesis of pseudouridine from uracil-55 in the psi GC loop of transfer RNAs. The sequence is that of tRNA pseudouridine synthase B from Ureaplasma parvum serovar 3 (strain ATCC 27815 / 27 / NCTC 11736).